A 164-amino-acid chain; its full sequence is Protein-export protein SecB (164 aa).

This sequence belongs to the SecB family. Homotetramer, a dimer of dimers. One homotetramer interacts with 1 SecA dimer.

The protein localises to the cytoplasm. One of the proteins required for the normal export of preproteins out of the cell cytoplasm. It is a molecular chaperone that binds to a subset of precursor proteins, maintaining them in a translocation-competent state. It also specifically binds to its receptor SecA. The protein is Protein-export protein SecB of Nitrosococcus oceani (strain ATCC 19707 / BCRC 17464 / JCM 30415 / NCIMB 11848 / C-107).